Here is a 353-residue protein sequence, read N- to C-terminus: Photosystem II D2 protein (353 aa).

N-acetylthreonine is present on Thr-2. A Phosphothreonine modification is found at Thr-2. A helical transmembrane segment spans residues 41-61 (CAYFALGGWLTGTTFVTSWYT). A chlorophyll a-binding site is contributed by His-118. Residues 125–141 (GFMLRQFEIARSVGLRP) form a helical membrane-spanning segment. Pheophytin a contacts are provided by Gln-130 and Asn-143. The helical transmembrane segment at 153–166 (VFVSVFLIYPLGQS) threads the bilayer. His-198 lines the chlorophyll a pocket. The chain crosses the membrane as a helical span at residues 208 to 228 (AALLCAIHGATVENTIFEDGD). The a plastoquinone site is built by His-215 and Phe-262. Position 215 (His-215) interacts with Fe cation. Residue His-269 coordinates Fe cation. Residues 279–295 (GLWMSAIGVVGLALNLR) form a helical membrane-spanning segment.

Belongs to the reaction center PufL/M/PsbA/D family. As to quaternary structure, PSII is composed of 1 copy each of membrane proteins PsbA, PsbB, PsbC, PsbD, PsbE, PsbF, PsbH, PsbI, PsbJ, PsbK, PsbL, PsbM, PsbT, PsbX, PsbY, PsbZ, Psb30/Ycf12, at least 3 peripheral proteins of the oxygen-evolving complex and a large number of cofactors. It forms dimeric complexes. The cofactor is The D1/D2 heterodimer binds P680, chlorophylls that are the primary electron donor of PSII, and subsequent electron acceptors. It shares a non-heme iron and each subunit binds pheophytin, quinone, additional chlorophylls, carotenoids and lipids. There is also a Cl(-1) ion associated with D1 and D2, which is required for oxygen evolution. The PSII complex binds additional chlorophylls, carotenoids and specific lipids..

It localises to the plastid. Its subcellular location is the chloroplast thylakoid membrane. It catalyses the reaction 2 a plastoquinone + 4 hnu + 2 H2O = 2 a plastoquinol + O2. Photosystem II (PSII) is a light-driven water:plastoquinone oxidoreductase that uses light energy to abstract electrons from H(2)O, generating O(2) and a proton gradient subsequently used for ATP formation. It consists of a core antenna complex that captures photons, and an electron transfer chain that converts photonic excitation into a charge separation. The D1/D2 (PsbA/PsbD) reaction center heterodimer binds P680, the primary electron donor of PSII as well as several subsequent electron acceptors. D2 is needed for assembly of a stable PSII complex. This chain is Photosystem II D2 protein, found in Staurastrum punctulatum (Green alga).